The chain runs to 487 residues: Serine/threonine-protein kinase 4 (487 aa).

M1 is modified (N-acetylmethionine). Position 3 is a phosphothreonine (T3). One can recognise a Protein kinase domain in the interval 30 to 281 (FDVLEKLGEG…ATQLLQHPFV (252 aa)). ATP-binding positions include 36 to 44 (LGEGSYGSV) and K59. D149 serves as the catalytic Proton acceptor. Residue T183 is modified to Phosphothreonine; by autocatalysis. At S265 the chain carries Phosphoserine. The stretch at 290–310 (LRDLINEAMDVKLKRQEAQQR) forms a coiled coil. A disordered region spans residues 305-338 (QEAQQREVDQDDEENSEEDELDSGTMVRAVGDDM). Residues 313-326 (DQDDEENSEEDELD) are compositionally biased toward acidic residues. S320 bears the Phosphoserine mark. T340 and T367 each carry phosphothreonine. Residue T387 is modified to Phosphothreonine; by PKB/AKT1. Residues S410 and S414 each carry the phosphoserine modification. Y433 carries the post-translational modification Phosphotyrosine. One can recognise an SARAH domain in the interval 433–480 (YEFLKSWTVEDLQKRLLALDPMMEQEIEEIRQKYQSKRQPILDAIEAK).

It belongs to the protein kinase superfamily. STE Ser/Thr protein kinase family. STE20 subfamily. In terms of assembly, homodimer; mediated via the coiled-coil region. Interacts with NORE1, which inhibits autoactivation. Interacts with and stabilizes SAV1. Interacts with RASSF1. Interacts with FOXO3. Interacts with RASSF2 (via SARAH domain). Interacts with AR, PKB/AKT1, TNNI3 and SIRT1. Interacts with DLG5 (via PDZ domain 3). Interacts with MARK3 and SCRIB in the presence of DLG5. The cofactor is Mg(2+). In terms of processing, autophosphorylated on serine and threonine residues. Phosphorylation at Thr-387 by PKB/AKT1, leads to inhibition of its: kinase activity, nuclear translocation and autophosphorylation at Thr-183. It also diminishes its cleavage by caspases and its ability to phosphorylate FOXO3. Post-translationally, proteolytically cleaved by caspase-3 during apoptosis at Asp-326 and Asp-349 resulting in a 37 kDa or a 39 kDa subunit respectively. The 39 kDa subunit is further cleaved into the 37 kDa form. Proteolytic cleavage results in kinase activation and nuclear translocation of the truncated form (MST1/N). It is less likely that cleavage at Asp-349 is a prerequisite for activation as this site is not conserved in the murine ortholog.

Its subcellular location is the cytoplasm. The protein resides in the nucleus. It carries out the reaction L-seryl-[protein] + ATP = O-phospho-L-seryl-[protein] + ADP + H(+). The catalysed reaction is L-threonyl-[protein] + ATP = O-phospho-L-threonyl-[protein] + ADP + H(+). With respect to regulation, inhibited by the C-terminal non-catalytic region. Activated by caspase-cleavage. Full activation also requires homodimerization and autophosphorylation of Thr-183. Activated by RASSF1 which acts by preventing its dephosphorylation. In terms of biological role, stress-activated, pro-apoptotic kinase which, following caspase-cleavage, enters the nucleus and induces chromatin condensation followed by internucleosomal DNA fragmentation. Key component of the Hippo signaling pathway which plays a pivotal role in organ size control and tumor suppression by restricting proliferation and promoting apoptosis. The core of this pathway is composed of a kinase cascade wherein STK3/MST2 and STK4/MST1, in complex with its regulatory protein SAV1, phosphorylates and activates LATS1/2 in complex with its regulatory protein MOB1, which in turn phosphorylates and inactivates YAP1 oncoprotein and WWTR1/TAZ. Phosphorylation of YAP1 by LATS2 inhibits its translocation into the nucleus to regulate cellular genes important for cell proliferation, cell death, and cell migration. STK3/MST2 and STK4/MST1 are required to repress proliferation of mature hepatocytes, to prevent activation of facultative adult liver stem cells (oval cells), and to inhibit tumor formation. Phosphorylates 'Ser-14' of histone H2B (H2BS14ph) during apoptosis. Phosphorylates FOXO3 upon oxidative stress, which results in its nuclear translocation and cell death initiation. Phosphorylates MOBKL1A, MOBKL1B and RASSF2. Phosphorylates TNNI3 (cardiac Tn-I) and alters its binding affinity to TNNC1 (cardiac Tn-C) and TNNT2 (cardiac Tn-T). Phosphorylates FOXO1 on 'Ser-212' and regulates its activation and stimulates transcription of PMAIP1 in a FOXO1-dependent manner. Phosphorylates SIRT1 and inhibits SIRT1-mediated p53/TP53 deacetylation, thereby promoting p53/TP53 dependent transcription and apoptosis upon DNA damage. Acts as an inhibitor of PKB/AKT1. Phosphorylates AR on 'Ser-650' and suppresses its activity by intersecting with PKB/AKT1 signaling and antagonizing formation of AR-chromatin complexes. This chain is Serine/threonine-protein kinase 4 (STK4), found in Lemur catta (Ring-tailed lemur).